A 204-amino-acid chain; its full sequence is NADH-ubiquinone oxidoreductase subunit 9 (204 aa).

This sequence belongs to the complex I 30 kDa subunit family. In terms of assembly, complex I is composed of about 30 different subunits.

The protein localises to the mitochondrion inner membrane. It catalyses the reaction a ubiquinone + NADH + 5 H(+)(in) = a ubiquinol + NAD(+) + 4 H(+)(out). Functionally, core subunit of the mitochondrial membrane respiratory chain NADH dehydrogenase (Complex I) that is believed to belong to the minimal assembly required for catalysis. Complex I functions in the transfer of electrons from NADH to the respiratory chain. The immediate electron acceptor for the enzyme is believed to be ubiquinone. The polypeptide is NADH-ubiquinone oxidoreductase subunit 9 (NAD9) (Reclinomonas americana).